A 587-amino-acid polypeptide reads, in one-letter code: A-type ATP synthase subunit A (587 aa).

Residue 234-241 (GPFGSGKT) coordinates ATP.

It belongs to the ATPase alpha/beta chains family. The N-terminus (approximately residues 106-122) interacts with subunit H. Has multiple subunits with at least A(3), B(3), C, D, E(1 or 2), F, H(2), I and proteolipid K(x).

It localises to the cell membrane. It catalyses the reaction ATP + H2O + 4 H(+)(in) = ADP + phosphate + 5 H(+)(out). Its activity is regulated as follows. ATP hydrolysis is inhibited by N',N'-dicyclohexylcarbodiimide. Component of the A-type ATP synthase that produces ATP from ADP in the presence of a proton gradient across the membrane. The A chain is the catalytic subunit. Hydrolyzes ATP, GTP (86% of ATPase rate) and UTP (54% of ATPase rate), has very poor activity on CTP. In Methanocaldococcus jannaschii (strain ATCC 43067 / DSM 2661 / JAL-1 / JCM 10045 / NBRC 100440) (Methanococcus jannaschii), this protein is A-type ATP synthase subunit A.